Consider the following 93-residue polypeptide: Small ribosomal subunit protein uS19 (93 aa).

The protein belongs to the universal ribosomal protein uS19 family.

Its function is as follows. Protein S19 forms a complex with S13 that binds strongly to the 16S ribosomal RNA. The chain is Small ribosomal subunit protein uS19 from Leifsonia xyli subsp. xyli (strain CTCB07).